The primary structure comprises 725 residues: MTDRHELILTCPKGLEGLLLEEATALGLEEGREQTSAVRGYGALEVGYRLCLWSRLANRVLLVISRFPTVDAETLYQGVHAVDWAEHLLPSGSLAVEFSGRGSGIDNTHFGALKVKDAIVDRLRSASGERPSIDKLDPDLRVHLRLDKGQAVLSLDLSGHSLHQRGYRLQQGAAPLKENLAAAILIRAGWPRIAAAGGALTDPMCGVGTFLVEGAMMAADIAPNLKRERWGFSAWLGHVPALWNRLHADAQARAEAGLARPPLWIRGYEADPRLIQPGRNNIERAGLSSWIRIYQGDVGSFEPRPDQNQKGLVICNPPYGERLGDEASLLYLYQNLGERLRQACLGWEAAVFTAAPDLGKRMGIRSHKQYAFWNGALPCKLLLIKVELDQFVTGQRAGSTEPQPQQAPVEQARLSEGGQMFANRLQKNLRQLGKWARREGIECYRLYDADMPEYALAVDLYRDWVHVQEYAPPRSIDPDKAQARLLDALAAIPQALGIAREKVVVKRRERQSGTRQYERQASQGEFLEVSEGGVKLLVNLTDYLDTGLFLDHRPLRLRIQREAAGKRFLNLFCYTATATVHAAKGGARSTTSVDLSRTYLDWARRNLSLNGFSDRQRLEQGDVMAWLEADRGEYDLIFIDPPTFSNSKRMEGVFDVQRDHVALLDLAMARLATGGTLYFSNNFRKFVLDASLMDRYAVEEITASTLDEDFRRNPRIHRAWKLQAR.

Positions 46 to 157 (VGYRLCLWSR…KGQAVLSLDL (112 aa)) constitute a THUMP domain.

Belongs to the methyltransferase superfamily. RlmKL family.

It localises to the cytoplasm. The catalysed reaction is guanosine(2445) in 23S rRNA + S-adenosyl-L-methionine = N(2)-methylguanosine(2445) in 23S rRNA + S-adenosyl-L-homocysteine + H(+). It catalyses the reaction guanosine(2069) in 23S rRNA + S-adenosyl-L-methionine = N(2)-methylguanosine(2069) in 23S rRNA + S-adenosyl-L-homocysteine + H(+). Functionally, specifically methylates the guanine in position 2445 (m2G2445) and the guanine in position 2069 (m7G2069) of 23S rRNA. The chain is Ribosomal RNA large subunit methyltransferase K/L from Stutzerimonas stutzeri (strain A1501) (Pseudomonas stutzeri).